We begin with the raw amino-acid sequence, 510 residues long: Beta-1,4 N-acetylgalactosaminyltransferase 2 (510 aa).

At 1–15 (MTSSVSFASFRFPWL) the chain is on the cytoplasmic side. The helical; Signal-anchor for type II membrane protein transmembrane segment at 16–32 (LKTFVLMVGLATVAFMV) threads the bilayer. Residues 33–510 (RKVSLTTDFS…YFKNHLYCST (478 aa)) lie on the Lumenal side of the membrane. N390 carries an N-linked (GlcNAc...) asparagine glycan.

The protein belongs to the glycosyltransferase 2 family. As to quaternary structure, homodimer; disulfide-linked.

It is found in the golgi apparatus. Its subcellular location is the trans-Golgi network membrane. The enzyme catalyses an N-acetyl-alpha-neuraminyl-(2-&gt;3)-beta-D-galactosyl derivative + UDP-N-acetyl-alpha-D-galactosamine = an N-acetyl-beta-D-galactosaminyl-(1-&gt;4)-[N-acetyl-alpha-neuraminyl-(2-&gt;3)]-beta-D-galactosyl derivative + UDP + H(+). It catalyses the reaction a 3-O-{alpha-Neu5Ac-(2-&gt;3)-beta-D-Gal-(1-&gt;3)-[alpha-Neu5Ac-(2-&gt;6)]-alpha-D-GalNAc}-L-seryl-[protein] + UDP-N-acetyl-alpha-D-galactosamine = a 3-O-{[alpha-Neu5Ac-(2-&gt;3)]-beta-D-GalNAc-(1-&gt;4)-beta-D-Gal-(1-&gt;3)-[alpha-Neu5Ac-(2-&gt;6)]-alpha-D-GalNAc}-L-seryl-[protein] + UDP + H(+). It carries out the reaction a 3-O-{alpha-Neu5Ac-(2-&gt;3)-beta-D-Gal-(1-&gt;3)-[alpha-Neu5Ac-(2-&gt;6)]-alpha-D-GalNAc}-L-threonyl-[protein] + UDP-N-acetyl-alpha-D-galactosamine = a 3-O-{[alpha-Neu5Ac-(2-&gt;3)]-beta-D-GalNAc-(1-&gt;4)-beta-D-Gal-(1-&gt;3)-[alpha-Neu5Ac-(2-&gt;6)]-alpha-D-GalNAc}-L-threonyl-[protein] + UDP + H(+). The catalysed reaction is a neolactoside IV(3)-alpha-NeuAc-nLc4Cer + UDP-N-acetyl-alpha-D-galactosamine = a neolactoside IV(4)-GalNAc,IV(3)-alpha-NeuAc-nLc4Cer + UDP + H(+). It functions in the pathway protein modification; protein glycosylation. The protein operates within glycolipid biosynthesis. Functionally, beta-1,4 N-acetylgalactosaminyltransferase involved in the biosynthesis of T-lymphocyte CT glycan antigen carried by CD45 family of protein phosphatases. Catalyzes the transfer of N-acetylgalactosamine (GalNAc) group in a beta-1,4-linkage from UDP-GalNAc to the galactose residue of NeuAcalpha2-&gt;3Gal-R to form GalNAcbeta1-&gt;4(NeuAcalpha2-&gt;3)Gal-R glycan epitope. This is Beta-1,4 N-acetylgalactosaminyltransferase 2 from Mus musculus (Mouse).